Consider the following 651-residue polypeptide: Apical membrane antigen 1-like protein (651 aa).

The first 41 residues, 1 to 41, serve as a signal peptide directing secretion; that stretch reads MPTESRSILARAEETRCRHLSRLLRAGLVFLLCDVLTSCLA. Positions 42-81 are cleaved as a propeptide — removed in mature form; the sequence is TPELQNTVIRSSKAHHLQLLFSSRSTPAVKFPLDATLSAP. Topologically, residues 42–570 are extracellular; sequence TPELQNTVIR…VEKEGSGGNT (529 aa). 7 cysteine pairs are disulfide-bonded: Cys-141–Cys-309, Cys-215–Cys-248, Cys-264–Cys-277, Cys-327–Cys-417, Cys-347–Cys-408, Cys-441–Cys-463, and Cys-453–Cys-475. Asn-230 is a glycosylation site (N-linked (GlcNAc...) asparagine). A 1; approximate repeat occupies 483-486; that stretch reads PPVK. The interval 483–531 is 12 x 4 AA approximate tandem-repeats of P-P-V-E; it reads PPVKPPVEPPVEPPVEPPVEPPVEPPVEPPVEPPVEPPVEPPVVEPPTE. Residues 483 to 547 show a composition bias toward pro residues; it reads PPVKPPVEPP…EPPVVLPPTP (65 aa). The disordered stretch occupies residues 483 to 567; it reads PPVKPPVEPP…DETVEKEGSG (85 aa). 9 repeat units span residues 487–490, 491–494, 495–498, 499–502, 503–506, 507–510, 511–514, 515–518, and 519–522. The stretch at 523-527 is one 11; approximate repeat; sequence PPVVE. A 12; approximate repeat occupies 528-531; sequence PPTE. Residues 571-591 traverse the membrane as a helical segment; the sequence is ALIAGSVLGMLIILALVGTCV. Residues 592–651 lie on the Cytoplasmic side of the membrane; that stretch reads GFYYRKRPLPPTERPTVEASGGREVEGPSDVAVPPDHSWWGEGEHETESLLGSRAVDAEF. The segment at 598–651 is disordered; sequence RPLPPTERPTVEASGGREVEGPSDVAVPPDHSWWGEGEHETESLLGSRAVDAEF.

The protein belongs to the apicomplexan parasites AMA1 family. Proteolytically cleaved within its transmembrane domain, releasing a soluble form from the cell surface.

The protein resides in the cell membrane. The protein localises to the secreted. In terms of biological role, may play a role in host cell invasion. The chain is Apical membrane antigen 1-like protein from Toxoplasma gondii (strain ATCC 50861 / VEG).